Consider the following 103-residue polypeptide: Small ribosomal subunit protein uS10c (103 aa).

The protein belongs to the universal ribosomal protein uS10 family. In terms of assembly, part of the 30S ribosomal subunit.

It localises to the plastid. The protein resides in the chloroplast. Functionally, involved in the binding of tRNA to the ribosomes. In Trieres chinensis (Marine centric diatom), this protein is Small ribosomal subunit protein uS10c.